The sequence spans 415 residues: Gamma-glutamyl phosphate reductase (415 aa).

Belongs to the gamma-glutamyl phosphate reductase family.

The protein localises to the cytoplasm. It carries out the reaction L-glutamate 5-semialdehyde + phosphate + NADP(+) = L-glutamyl 5-phosphate + NADPH + H(+). Its pathway is amino-acid biosynthesis; L-proline biosynthesis; L-glutamate 5-semialdehyde from L-glutamate: step 2/2. Functionally, catalyzes the NADPH-dependent reduction of L-glutamate 5-phosphate into L-glutamate 5-semialdehyde and phosphate. The product spontaneously undergoes cyclization to form 1-pyrroline-5-carboxylate. The sequence is that of Gamma-glutamyl phosphate reductase from Dictyoglomus thermophilum (strain ATCC 35947 / DSM 3960 / H-6-12).